Consider the following 185-residue polypeptide: dCTP deaminase, dUMP-forming (185 aa).

Residues 99–104, D117, 125–127, Q146, Y159, K166, and Q170 each bind dCTP; these read KSSIAR and TLE. E127 serves as the catalytic Proton donor/acceptor.

It belongs to the dCTP deaminase family. In terms of assembly, homotrimer.

It carries out the reaction dCTP + 2 H2O = dUMP + NH4(+) + diphosphate. It functions in the pathway pyrimidine metabolism; dUMP biosynthesis; dUMP from dCTP: step 1/1. Its function is as follows. Bifunctional enzyme that catalyzes both the deamination of dCTP to dUTP and the hydrolysis of dUTP to dUMP without releasing the toxic dUTP intermediate. The polypeptide is dCTP deaminase, dUMP-forming (Methanospirillum hungatei JF-1 (strain ATCC 27890 / DSM 864 / NBRC 100397 / JF-1)).